A 620-amino-acid polypeptide reads, in one-letter code: Sodium-dependent dopamine transporter (620 aa).

The Cytoplasmic segment spans residues 1–56 (MSKSKCSVGLMSSVVAPAKEPNAVGPKEVELILVKEQNGVQLTSSTLTNPRQSPVE). A discontinuously helical transmembrane segment spans residues 57–95 (AQDRETWGKKIDFLLSVIGFAVDLANVWRFPYLCYKNGG). Gly75, Ala77, Val78, Asp79, and Asn82 together coordinate Na(+). Asp79 contributes to the dopamine binding site. The next 2 helical transmembrane spans lie at 96 to 127 (GAFL…NREG) and 128 to 171 (AAGV…FSSF). 2 residues coordinate dopamine: Ser149 and Gly153. The Extracellular portion of the chain corresponds to 172–236 (TTELPWIHCN…SHGIDDLGPP (65 aa)). Cysteines 180 and 189 form a disulfide. Residues Asn181, Asn188, and Asn205 are each glycosylated (N-linked (GlcNAc...) asparagine). Transmembrane regions (helical) follow at residues 237-256 (RWQL…FSLW) and 257-287 (KGVK…GVTL). At 288–306 (PGAIDGIRAYLSVDFYRLC) the chain is on the extracellular side. Residues 307 to 335 (EASVWIDAATQVCFSLGVGFGVLIAFSSY) traverse the membrane as a discontinuously helical segment. Gln317 provides a ligand contact to chloride. A dopamine-binding site is contributed by Phe320. Positions 321 and 353 each coordinate Na(+). Position 321 (Ser321) interacts with chloride. Residues 336 to 376 (NKFTNNCYRDAIVTTSINSLTSFSSGFVVFSFLGYMAQKHS) form a helical membrane-spanning segment. A chloride-binding site is contributed by Ser357. The Extracellular portion of the chain corresponds to 377 to 400 (VPIGDVAKDGPGLIFIIYPEAIAT). The next 3 helical transmembrane spans lie at 401 to 442 (LPLS…QLLH), 443 to 466 (RHRE…CVTN), and 467 to 499 (GGIY…AWFY). Positions 418, 421, and 422 each coordinate Na(+). Residues Ser422 and Ala423 each coordinate dopamine. Topologically, residues 500–516 (GVGQFSDDIQQMTGQRP) are cytoplasmic. A helical membrane pass occupies residues 517–542 (SLYWRLCWKLVSPCFLLFVVVVSIVT). Residues 543 to 553 (FRPPHYGAYIF) are Extracellular-facing. A helical membrane pass occupies residues 554–583 (PDWANALGWVIATSSMAMVPIYAAYKFCSL). The interaction with TGFB1I1 stretch occupies residues 561–590 (GWVIATSSMAMVPIYAAYKFCSLPGSFREK). The Cytoplasmic portion of the chain corresponds to 584-620 (PGSFREKLAYAIAPEKDRELVDRGEVRQFTLRHWLKV).

The protein belongs to the sodium:neurotransmitter symporter (SNF) (TC 2.A.22) family. SLC6A3 subfamily. As to quaternary structure, monomer. Homooligomer; disulfide-linked. Interacts with PRKCABP and TGFB1I1. Interacts (via N-terminus) with SYNGR3 (via N-terminus). Interacts with SLC18A2. Interacts with TOR1A (ATP-bound); TOR1A regulates SLC6A3 subcellular location. Interacts with alpha-synuclein/SNCA. Interacts with SEPTIN4. In terms of tissue distribution, highly expressed in substantia nigra. Expressed in axonal varicosities in dopaminergic nerve terminals (at protein level). Expressed in the striatum (at protein level).

It localises to the cell membrane. Its subcellular location is the cell projection. It is found in the neuron projection. The protein resides in the axon. It carries out the reaction dopamine(out) + chloride(out) + Na(+)(out) = dopamine(in) + chloride(in) + Na(+)(in). The enzyme catalyses dopamine(out) + chloride(out) + 2 Na(+)(out) = dopamine(in) + chloride(in) + 2 Na(+)(in). The catalysed reaction is (R)-noradrenaline(out) + chloride(out) + Na(+)(out) = (R)-noradrenaline(in) + chloride(in) + Na(+)(in). Inhibited by cocaine, which occupies the same binding site as dopamine. Inhibited by zinc ions. Enhanced by the antibiotic valinomycin. Inhibited by benztropine. Inhibited by GBR 12909 dihydrochloride and amphetamine. Inhibited by mazindol, GBR 12783 dihydrochloride, nomifensine, diclofensine, amfonelic acid, Lu 19005, Win-35428, bupropion and ritalin. In terms of biological role, mediates sodium- and chloride-dependent transport of dopamine. Also mediates sodium- and chloride-dependent transport of norepinephrine (also known as noradrenaline). Regulator of light-dependent retinal hyaloid vessel regression, downstream of OPN5 signaling. This is Sodium-dependent dopamine transporter (SLC6A3) from Homo sapiens (Human).